A 111-amino-acid polypeptide reads, in one-letter code: UPF0060 membrane protein NFA_36830 (111 aa).

A run of 4 helical transmembrane segments spans residues 7-27 (LVLFGLAALAEIGGAWLVWQG), 33-53 (GLWWIAAGVIALGAYGFVATF), 62-82 (VLAAYGGVFVVGSLAWGVLVD), and 91-111 (LLGAGICLVGVAVIMYAPRGG).

This sequence belongs to the UPF0060 family.

It is found in the cell membrane. The polypeptide is UPF0060 membrane protein NFA_36830 (Nocardia farcinica (strain IFM 10152)).